Reading from the N-terminus, the 413-residue chain is Eukaryotic initiation factor 4A-14 (413 aa).

A Q motif motif is present at residues 40 to 68 (DSFDAMGLQENLLRGIYAYGFEKPSAIQQ). A Helicase ATP-binding domain is found at 71–241 (IVPFCKGLDV…RKFMSKPVRI (171 aa)). Position 84 to 91 (84 to 91 (AQSGTGKT)) interacts with ATP. The DEAD box signature appears at 189–192 (DEAD). One can recognise a Helicase C-terminal domain in the interval 252–413 (GIKQFYVNVD…ELPANVADLL (162 aa)).

Belongs to the DEAD box helicase family. eIF4A subfamily. As to quaternary structure, eIF4F is a multi-subunit complex, the composition of which varies with external and internal environmental conditions. It is composed of at least EIF4A, EIF4E and EIF4G.

The catalysed reaction is ATP + H2O = ADP + phosphate + H(+). Its function is as follows. ATP-dependent RNA helicase which is a subunit of the eIF4F complex involved in cap recognition and is required for mRNA binding to ribosome. In the current model of translation initiation, eIF4A unwinds RNA secondary structures in the 5'-UTR of mRNAs which is necessary to allow efficient binding of the small ribosomal subunit, and subsequent scanning for the initiator codon. This chain is Eukaryotic initiation factor 4A-14, found in Nicotiana tabacum (Common tobacco).